Reading from the N-terminus, the 1051-residue chain is Putative helicase/primase complex protein (1051 aa).

This sequence belongs to the asfivirus F1055L family.

Its function is as follows. May be involved in DNA replication. The protein is Putative helicase/primase complex protein of Ornithodoros (relapsing fever ticks).